The chain runs to 207 residues: 3,4-dihydroxy-2-butanone 4-phosphate synthase (207 aa).

D-ribulose 5-phosphate is bound by residues 28-29 (RE), Asp33, 140-144 (RRGHT), and Glu164. Glu29 serves as a coordination point for Mg(2+). His143 is a Mg(2+) binding site.

It belongs to the DHBP synthase family. In terms of assembly, homodimer. Mg(2+) is required as a cofactor. The cofactor is Mn(2+).

It catalyses the reaction D-ribulose 5-phosphate = (2S)-2-hydroxy-3-oxobutyl phosphate + formate + H(+). Its pathway is cofactor biosynthesis; riboflavin biosynthesis; 2-hydroxy-3-oxobutyl phosphate from D-ribulose 5-phosphate: step 1/1. In terms of biological role, catalyzes the conversion of D-ribulose 5-phosphate to formate and 3,4-dihydroxy-2-butanone 4-phosphate. The polypeptide is 3,4-dihydroxy-2-butanone 4-phosphate synthase (Oceanobacillus iheyensis (strain DSM 14371 / CIP 107618 / JCM 11309 / KCTC 3954 / HTE831)).